The primary structure comprises 85 residues: MPAPLTLDGFRADLAEFLYQQPDEVDLEENPLYAGLDSLRIVTLIERWRETGADVSFIELAECTSFDQWWQLLSARQGGAGHVTA.

The Carrier domain occupies 1 to 77; it reads MPAPLTLDGF…QWWQLLSARQ (77 aa). Serine 38 is modified (O-(pantetheine 4'-phosphoryl)serine).

The protein belongs to the acyl carrier protein (ACP) family. The cofactor is pantetheine 4'-phosphate.

The protein operates within lipid metabolism; fatty acid metabolism. Functionally, acyl-carrier protein (ACP) involved in the biosynthesis of a unique class of isonitrile lipopeptides (INLPs). Is the dedicated ACP for the loading of activated acyl groups catalyzed by ScoC. The polypeptide is Acyl carrier protein ScoB (Streptomyces coeruleorubidus).